The primary structure comprises 128 residues: Small ribosomal subunit protein bS6 (128 aa).

The protein belongs to the bacterial ribosomal protein bS6 family.

Functionally, binds together with bS18 to 16S ribosomal RNA. The protein is Small ribosomal subunit protein bS6 (rpsF) of Thermotoga maritima (strain ATCC 43589 / DSM 3109 / JCM 10099 / NBRC 100826 / MSB8).